A 152-amino-acid polypeptide reads, in one-letter code: Small ribosomal subunit protein uS15 (152 aa).

The protein belongs to the universal ribosomal protein uS15 family. In terms of assembly, part of the 30S ribosomal subunit.

This Methanocorpusculum labreanum (strain ATCC 43576 / DSM 4855 / Z) protein is Small ribosomal subunit protein uS15.